The following is a 755-amino-acid chain: Serine/threonine-protein kinase GA29083 (755 aa).

Over residues glutamine 18–lysine 52 the composition is skewed to low complexity. Residues glutamine 18–serine 128 are disordered. Basic and acidic residues-rich tracts occupy residues alanine 53–aspartate 66 and glutamate 74–aspartate 84. Positions glycine 87–asparagine 99 are enriched in polar residues. Low complexity predominate over residues glycine 100 to serine 128. 2 consecutive Doublecortin domains span residues histidine 157–asparagine 243 and arginine 314–phenylalanine 397. The Protein kinase domain maps to tyrosine 484 to threonine 742. ATP-binding positions include isoleucine 490 to valine 498 and lysine 513. Catalysis depends on aspartate 605, which acts as the Proton acceptor.

It belongs to the protein kinase superfamily. CAMK Ser/Thr protein kinase family. CaMK subfamily.

It catalyses the reaction L-seryl-[protein] + ATP = O-phospho-L-seryl-[protein] + ADP + H(+). It carries out the reaction L-threonyl-[protein] + ATP = O-phospho-L-threonyl-[protein] + ADP + H(+). This chain is Serine/threonine-protein kinase GA29083, found in Drosophila pseudoobscura pseudoobscura (Fruit fly).